A 328-amino-acid chain; its full sequence is Reticulocalbin-3 (328 aa).

The first 20 residues, 1–20, serve as a signal peptide directing secretion; the sequence is MMWRWSFLLLLLLLRHWALG. The interval 24 to 48 is disordered; it reads PDAGPHGQDRVHHGTPLSEAPHDDA. EF-hand domains lie at 77-112, 113-148, 163-198, 200-235, 241-276, and 277-312; these read QARLGRIVDRMDLAGDSDGWVSLAELRAWIAHTQQR, HIRDSVSAAWHTYDTDRDGRVGWEELRNATYGHYEP, KMLARDERRFRVADQDGDSMATREELTAFLHPEEFP, MRDIVVAETLEDLDKNKDGYVQVEEYIADLYSEEPG, WVQTERQQFREFRDLNKDGRLDGSEVGYWVLPPSQD, and QPLVEANHLLHESDTDKDGRLSKAEILSNWNMFVGS. D92, D94, W96, E101, D126, D128, D130, R132, and E137 together coordinate Ca(2+). Residue N140 is glycosylated (N-linked (GlcNAc...) asparagine). Residues D176, D178, D180, M182, E187, D213, N215, D217, Y219, E224, D254, N256, D258, R260, E265, D290, D292, D294, R296, and E301 each coordinate Ca(2+). The Prevents secretion from ER signature appears at 325–328; the sequence is HDEL.

The protein belongs to the CREC family. As to quaternary structure, interacts with PCSK6 (immature form including the propeptide); probably involved in the maturation and the secretion of PCSK6. Degraded by PCSK6 and other endoproteases including FURIN and PCSK5. Post-translationally, N-glycosylated. Highly expressed in lung and heart. Also detected in liver, spleen, kidney, skeletal muscle, intestine, stomach, and brain.

It localises to the endoplasmic reticulum lumen. Its function is as follows. Probable molecular chaperone assisting protein biosynthesis and transport in the endoplasmic reticulum. Required for the proper biosynthesis and transport of pulmonary surfactant-associated protein A/SP-A, pulmonary surfactant-associated protein D/SP-D and the lipid transporter ABCA3. By regulating both the proper expression and the degradation through the endoplasmic reticulum-associated protein degradation pathway of these proteins plays a crucial role in pulmonary surfactant homeostasis. Has an anti-fibrotic activity by negatively regulating the secretion of type I and type III collagens. This calcium-binding protein also transiently associates with immature PCSK6 and regulates its secretion. This chain is Reticulocalbin-3, found in Mus musculus (Mouse).